Reading from the N-terminus, the 176-residue chain is Small ribosomal subunit protein uS5c (176 aa).

The S5 DRBM domain occupies 26 to 89 (LVERLIKISR…TDGRKNLIEL (64 aa)).

This sequence belongs to the universal ribosomal protein uS5 family. In terms of assembly, part of the 30S ribosomal subunit. Contacts protein S4.

The protein localises to the plastid. The protein resides in the chloroplast. Its function is as follows. With S4 and S12 plays an important role in translational accuracy. The polypeptide is Small ribosomal subunit protein uS5c (rps5) (Phaeodactylum tricornutum (strain CCAP 1055/1)).